The sequence spans 163 residues: ATP synthase subunit b, sodium ion specific (163 aa).

A helical membrane pass occupies residues 9–29 (VSIDINMFWQIINFLILMFFF).

It belongs to the ATPase B chain family. As to quaternary structure, F-type ATPases have 2 components, F(1) - the catalytic core - and F(0) - the membrane proton channel. F(1) has five subunits: alpha(3), beta(3), gamma(1), delta(1), epsilon(1). F(0) has three main subunits: a(1), b(2) and c(10-14). The alpha and beta chains form an alternating ring which encloses part of the gamma chain. F(1) is attached to F(0) by a central stalk formed by the gamma and epsilon chains, while a peripheral stalk is formed by the delta and b chains.

Its subcellular location is the cell inner membrane. In terms of biological role, f(1)F(0) ATP synthase produces ATP from ADP in the presence of a proton or sodium gradient. F-type ATPases consist of two structural domains, F(1) containing the extramembraneous catalytic core and F(0) containing the membrane proton channel, linked together by a central stalk and a peripheral stalk. During catalysis, ATP synthesis in the catalytic domain of F(1) is coupled via a rotary mechanism of the central stalk subunits to proton translocation. Functionally, component of the F(0) channel, it forms part of the peripheral stalk, linking F(1) to F(0). The chain is ATP synthase subunit b, sodium ion specific (atpF) from Ilyobacter tartaricus.